The chain runs to 177 residues: Large ribosomal subunit protein uL6 (177 aa).

This sequence belongs to the universal ribosomal protein uL6 family. In terms of assembly, part of the 50S ribosomal subunit.

In terms of biological role, this protein binds to the 23S rRNA, and is important in its secondary structure. It is located near the subunit interface in the base of the L7/L12 stalk, and near the tRNA binding site of the peptidyltransferase center. The polypeptide is Large ribosomal subunit protein uL6 (Idiomarina loihiensis (strain ATCC BAA-735 / DSM 15497 / L2-TR)).